Here is a 190-residue protein sequence, read N- to C-terminus: Large ribosomal subunit protein bL9 (190 aa).

This sequence belongs to the bacterial ribosomal protein bL9 family.

Functionally, binds to the 23S rRNA. This chain is Large ribosomal subunit protein bL9, found in Methylorubrum populi (strain ATCC BAA-705 / NCIMB 13946 / BJ001) (Methylobacterium populi).